The chain runs to 620 residues: DNA primase (620 aa).

The segment at 38–62 (CPFHADQNPSMTVSVAKNIFKCFSC) adopts a CHC2-type zinc-finger fold. The 85-residue stretch at 266–350 (LKLYLVEGYF…IVEVVDWNQA (85 aa)) folds into the Toprim domain. Mg(2+) is bound by residues glutamate 272, aspartate 319, and aspartate 321.

It belongs to the DnaG primase family. Monomer. Interacts with DnaB. The cofactor is Zn(2+). It depends on Mg(2+) as a cofactor.

It carries out the reaction ssDNA + n NTP = ssDNA/pppN(pN)n-1 hybrid + (n-1) diphosphate.. Its function is as follows. RNA polymerase that catalyzes the synthesis of short RNA molecules used as primers for DNA polymerase during DNA replication. The sequence is that of DNA primase from Mycoplasma pneumoniae (strain ATCC 29342 / M129 / Subtype 1) (Mycoplasmoides pneumoniae).